The primary structure comprises 162 residues: Endoribonuclease YbeY (162 aa).

Residues His-128, His-132, and His-138 each contribute to the Zn(2+) site.

This sequence belongs to the endoribonuclease YbeY family. Requires Zn(2+) as cofactor.

The protein localises to the cytoplasm. Single strand-specific metallo-endoribonuclease involved in late-stage 70S ribosome quality control and in maturation of the 3' terminus of the 16S rRNA. This chain is Endoribonuclease YbeY, found in Lactococcus lactis subsp. lactis (strain IL1403) (Streptococcus lactis).